Consider the following 242-residue polypeptide: MGHKIHPTGLRLGITQEHRSRWYASSKTYPSLLQEDDRIRKFIHKKYGSAGISDVLIARKADQLEVELKTARPGVLVGRQGSGIEDLRAGIQKTVGDKSRQVRINVVEVERVDGDAFLLAEYIAQQLEKRVAFRRTIRMAVQRAQRAGVLGLKIQVSGRLNGAEIARTEWTREGRVPLHTLRADIDYATKVGKTTYGVLGIKVWVFKGEVLNEQSQTMPVGANPRRRASRRPQQFEDRSNEG.

The 72-residue stretch at 39 to 110 (IRKFIHKKYG…QVRINVVEVE (72 aa)) folds into the KH type-2 domain. The disordered stretch occupies residues 216–242 (QTMPVGANPRRRASRRPQQFEDRSNEG). Positions 233–242 (QQFEDRSNEG) are enriched in basic and acidic residues.

It belongs to the universal ribosomal protein uS3 family. Part of the 30S ribosomal subunit. Forms a tight complex with proteins S10 and S14.

Functionally, binds the lower part of the 30S subunit head. Binds mRNA in the 70S ribosome, positioning it for translation. This is Small ribosomal subunit protein uS3 from Synechococcus sp. (strain CC9902).